A 307-amino-acid chain; its full sequence is MKQPYNHGVLFYHEHSGLKDIHNGIGEVAKSLSSMCKHLSLQLSENKGDIIKYCKSIKNENYSSDVDVLFILGGDGTLNELVNGVMQYQLNLPIGVIPGGTFNDFTKTLQLHPNFKTASEQLLTSHAESYDVLKVNDLYVLNFVGLGLIVQNAENVQDGSKDIFGKFSYIGSTVKTLLNPVKFDFSLTVDGETKEGNTSMMLIANGPNIGGGQIPLTDLSPQDGRANTFVFNDQTLNILNDILKKRDSMNWNEITQGIDHISGKHITLSTNPSMKVDIDGEINLETPIEIQVLPKAIQLLTATEQNN.

A DAGKc domain is found at 3–139 (QPYNHGVLFY…YDVLKVNDLY (137 aa)). Residues S44, 74–80 (GDGTLNE), and T101 contribute to the ATP site. Residues S220, D223, and R225 each contribute to the Mg(2+) site. E281 functions as the Proton acceptor in the catalytic mechanism.

It belongs to the diacylglycerol/lipid kinase family. Mg(2+) serves as cofactor.

In terms of biological role, may catalyze the ATP-dependent phosphorylation of lipids other than diacylglycerol (DAG). The polypeptide is Putative lipid kinase SERP0390 (Staphylococcus epidermidis (strain ATCC 35984 / DSM 28319 / BCRC 17069 / CCUG 31568 / BM 3577 / RP62A)).